Consider the following 197-residue polypeptide: Thymidine kinase (197 aa).

ATP contacts are provided by residues 9 to 16 (AAMNAGKS) and 83 to 86 (DESQ). The active-site Proton acceptor is E84. Zn(2+)-binding residues include C141, C143, C178, and C181.

This sequence belongs to the thymidine kinase family. Homotetramer.

Its subcellular location is the cytoplasm. The catalysed reaction is thymidine + ATP = dTMP + ADP + H(+). This is Thymidine kinase from Albidiferax ferrireducens (strain ATCC BAA-621 / DSM 15236 / T118) (Rhodoferax ferrireducens).